Reading from the N-terminus, the 224-residue chain is BTB/POZ domain-containing protein At5g48510 (224 aa).

The region spanning 24-98 (VDVMLKAKNS…ICSDGSMLSA (75 aa)) is the BTB domain.

In terms of assembly, interacts with CUL3A.

The protein operates within protein modification; protein ubiquitination. May act as a substrate-specific adapter of an E3 ubiquitin-protein ligase complex (CUL3-RBX1-BTB) which mediates the ubiquitination and subsequent proteasomal degradation of target proteins. This is BTB/POZ domain-containing protein At5g48510 from Arabidopsis thaliana (Mouse-ear cress).